A 35-amino-acid polypeptide reads, in one-letter code: Dolichyl-diphosphooligosaccharide--protein glycosyltransferase subunit 4B (35 aa).

At 1–8 (MFDDQDLG) the chain is on the lumenal side. The helical transmembrane segment at 9–29 (FFANFLGIFIFIMVIAYHFVV) threads the bilayer. Residues 30–35 (AEPKFE) are Cytoplasmic-facing.

This sequence belongs to the OST4 family. As to quaternary structure, component of the oligosaccharyltransferase (OST) complex.

It is found in the endoplasmic reticulum membrane. In terms of biological role, subunit of the oligosaccharyl transferase (OST) complex that catalyzes the initial transfer of a defined glycan (Glc(3)Man(9)GlcNAc(2) in eukaryotes) from the lipid carrier dolichol-pyrophosphate to an asparagine residue within an Asn-X-Ser/Thr consensus motif in nascent polypeptide chains, the first step in protein N-glycosylation. N-glycosylation occurs cotranslationally and the complex associates with the Sec61 complex at the channel-forming translocon complex that mediates protein translocation across the endoplasmic reticulum (ER). All subunits are required for a maximal enzyme activity. This Arabidopsis thaliana (Mouse-ear cress) protein is Dolichyl-diphosphooligosaccharide--protein glycosyltransferase subunit 4B (OST4B).